A 379-amino-acid polypeptide reads, in one-letter code: Probable 3-phenylpropionic acid transporter (379 aa).

Residues 1–4 lie on the Cytoplasmic side of the membrane; that stretch reads MVLQ. A helical membrane pass occupies residues 5–31; that stretch reads STRWLALGYFTYFFSYGIFLPFWSVWL. Over 32–37 the chain is Periplasmic; that stretch reads KGIGLT. The helical transmembrane segment at 38-66 threads the bilayer; sequence PETIGLLLGAGLVARFLGSLLIAPRVSDP. Topologically, residues 67–70 are cytoplasmic; that stretch reads SRLI. The helical transmembrane segment at 71 to 96 threads the bilayer; sequence SALRVLALLTLLFAVAFWAGAHVAWL. At 97–100 the chain is on the periplasmic side; it reads MLVM. A helical membrane pass occupies residues 101–118; the sequence is IGFNLFFSPLVPLTDALA. Over 119 to 129 the chain is Cytoplasmic; the sequence is NTWQKQFPLDY. The helical transmembrane segment at 130-152 threads the bilayer; sequence GKVRLWGSVAFVIGSALTGKLVT. The Periplasmic portion of the chain corresponds to 153 to 155; sequence MFD. Residues 156 to 175 traverse the membrane as a helical segment; that stretch reads YRVILALLTLGVASMLLGFL. At 176 to 207 the chain is on the cytoplasmic side; sequence IRPTIQPQGASRQQESTGWSAWLALVRQNWRF. Residues 208 to 227 traverse the membrane as a helical segment; that stretch reads LACVCLLQGAHAAYYGFSAI. Over 228 to 231 the chain is Periplasmic; the sequence is YWQA. The chain crosses the membrane as a helical span at residues 232-256; that stretch reads AGYSASAVGYLWSLGVVAEVIIFAL. The Cytoplasmic portion of the chain corresponds to 257-266; the sequence is SNKLFRRCSA. Residues 267-286 traverse the membrane as a helical segment; sequence RDMLLISAICGVVRWGIMGA. The Periplasmic portion of the chain corresponds to 287-289; the sequence is TTA. The chain crosses the membrane as a helical span at residues 290–312; that stretch reads LPWLIVVQILHCGTFTVCHLAAM. Residues 313–323 are Cytoplasmic-facing; it reads RYIAARQGSEV. The chain crosses the membrane as a helical span at residues 324–351; the sequence is IRLQAVYSAVAMGGSIAIMTVFAGFLYQ. Topologically, residues 352–354 are periplasmic; that stretch reads YLG. A helical transmembrane segment spans residues 355 to 375; it reads HGVFWVMALVALPAMFLRPKV. Topologically, residues 376–379 are cytoplasmic; the sequence is VPSC.

It belongs to the major facilitator superfamily. Phenyl propionate permease (PPP) (TC 2.A.1.27) family.

It localises to the cell inner membrane. Its function is as follows. Probable permease involved in the uptake of 3-phenylpropionic acid. The protein is Probable 3-phenylpropionic acid transporter (hcaT) of Escherichia coli (strain K12).